Reading from the N-terminus, the 217-residue chain is Small ribosomal subunit protein uS3 (217 aa).

The KH type-2 domain maps to 38–106 (IRKYIEQRLA…RVHINIIEIK (69 aa)).

The protein belongs to the universal ribosomal protein uS3 family. In terms of assembly, part of the 30S ribosomal subunit. Forms a tight complex with proteins S10 and S14.

Its function is as follows. Binds the lower part of the 30S subunit head. Binds mRNA in the 70S ribosome, positioning it for translation. This chain is Small ribosomal subunit protein uS3, found in Lactiplantibacillus plantarum (strain ATCC BAA-793 / NCIMB 8826 / WCFS1) (Lactobacillus plantarum).